Reading from the N-terminus, the 122-residue chain is Large ribosomal subunit protein uL14 (122 aa).

The protein belongs to the universal ribosomal protein uL14 family. Part of the 50S ribosomal subunit. Forms a cluster with proteins L3 and L19. In the 70S ribosome, L14 and L19 interact and together make contacts with the 16S rRNA in bridges B5 and B8.

Binds to 23S rRNA. Forms part of two intersubunit bridges in the 70S ribosome. This is Large ribosomal subunit protein uL14 from Hyphomonas neptunium (strain ATCC 15444).